The sequence spans 162 residues: Transcriptional repressor NrdR (162 aa).

The interval Met-1–Asp-21 is disordered. Residues Cys-3–Cys-34 fold into a zinc finger. An ATP-cone domain is found at Leu-49 to Glu-139.

This sequence belongs to the NrdR family. Zn(2+) is required as a cofactor.

Negatively regulates transcription of bacterial ribonucleotide reductase nrd genes and operons by binding to NrdR-boxes. The chain is Transcriptional repressor NrdR from Halorubrum lacusprofundi (strain ATCC 49239 / DSM 5036 / JCM 8891 / ACAM 34).